The chain runs to 355 residues: Peptide chain release factor 1 (355 aa).

N5-methylglutamine is present on Q233.

The protein belongs to the prokaryotic/mitochondrial release factor family. Methylated by PrmC. Methylation increases the termination efficiency of RF1.

The protein localises to the cytoplasm. Its function is as follows. Peptide chain release factor 1 directs the termination of translation in response to the peptide chain termination codons UAG and UAA. The sequence is that of Peptide chain release factor 1 from Bacillus cereus (strain ATCC 14579 / DSM 31 / CCUG 7414 / JCM 2152 / NBRC 15305 / NCIMB 9373 / NCTC 2599 / NRRL B-3711).